A 579-amino-acid chain; its full sequence is Arginine--tRNA ligase (579 aa).

A 'HIGH' region motif is present at residues 127–137 (PNLAKEMHVGH).

It belongs to the class-I aminoacyl-tRNA synthetase family. Monomer.

It localises to the cytoplasm. It catalyses the reaction tRNA(Arg) + L-arginine + ATP = L-arginyl-tRNA(Arg) + AMP + diphosphate. The polypeptide is Arginine--tRNA ligase (Stutzerimonas stutzeri (strain A1501) (Pseudomonas stutzeri)).